A 208-amino-acid chain; its full sequence is MTDNARQIVLEHATEGAKLRERYFQQNADRVVELALQMALTLARGRKIMFCGNGGSAADAQHLAAEFVNRFMMERPPLPALALTTDSSILTAIGNDYGFEQVFQKQVQALGQPGDMLVGISTSGNSPNVVLALKAAREKGVTTVGMTGRGGGEMAALCDYLLDVSDRRTPLVQEIHITVGHLLCQLTDHFLFENVLALQPYLEGKAPE.

Positions 38-200 (MALTLARGRK…LFENVLALQP (163 aa)) constitute an SIS domain. A substrate-binding site is contributed by 53-55 (NGG). Positions 62 and 66 each coordinate Zn(2+). Substrate is bound by residues E66, 95-96 (ND), 121-123 (STS), S126, and Q173. The Zn(2+) site is built by Q173 and H181.

It belongs to the SIS family. GmhA subfamily. Homotetramer. Zn(2+) is required as a cofactor.

The protein localises to the cytoplasm. The catalysed reaction is 2 D-sedoheptulose 7-phosphate = D-glycero-alpha-D-manno-heptose 7-phosphate + D-glycero-beta-D-manno-heptose 7-phosphate. The protein operates within carbohydrate biosynthesis; D-glycero-D-manno-heptose 7-phosphate biosynthesis; D-glycero-alpha-D-manno-heptose 7-phosphate and D-glycero-beta-D-manno-heptose 7-phosphate from sedoheptulose 7-phosphate: step 1/1. Catalyzes the isomerization of sedoheptulose 7-phosphate in D-glycero-D-manno-heptose 7-phosphate. In Nitratidesulfovibrio vulgaris (strain DSM 19637 / Miyazaki F) (Desulfovibrio vulgaris), this protein is Phosphoheptose isomerase.